Reading from the N-terminus, the 539-residue chain is Glucose-6-phosphate isomerase (539 aa).

E353 serves as the catalytic Proton donor. Residues H384 and K505 contribute to the active site.

Belongs to the GPI family.

Its subcellular location is the cytoplasm. The catalysed reaction is alpha-D-glucose 6-phosphate = beta-D-fructose 6-phosphate. It functions in the pathway carbohydrate biosynthesis; gluconeogenesis. It participates in carbohydrate degradation; glycolysis; D-glyceraldehyde 3-phosphate and glycerone phosphate from D-glucose: step 2/4. Catalyzes the reversible isomerization of glucose-6-phosphate to fructose-6-phosphate. The chain is Glucose-6-phosphate isomerase from Ralstonia pickettii (strain 12J).